The primary structure comprises 212 residues: dITP/XTP pyrophosphatase (212 aa).

7–12 (SRNKKK) serves as a coordination point for substrate. Asp-72 acts as the Proton acceptor in catalysis. Asp-72 serves as a coordination point for Mg(2+). Substrate contacts are provided by residues Ser-73, 163–166 (FGYD), Lys-187, and 192–193 (HR). The tract at residues 164–194 (GYDPLFEPAEAPGQSSAELTPERKDELSHRG) is disordered. Over residues 183–192 (TPERKDELSH) the composition is skewed to basic and acidic residues.

The protein belongs to the HAM1 NTPase family. As to quaternary structure, homodimer. Requires Mg(2+) as cofactor.

The catalysed reaction is XTP + H2O = XMP + diphosphate + H(+). It carries out the reaction dITP + H2O = dIMP + diphosphate + H(+). The enzyme catalyses ITP + H2O = IMP + diphosphate + H(+). Pyrophosphatase that catalyzes the hydrolysis of nucleoside triphosphates to their monophosphate derivatives, with a high preference for the non-canonical purine nucleotides XTP (xanthosine triphosphate), dITP (deoxyinosine triphosphate) and ITP. Seems to function as a house-cleaning enzyme that removes non-canonical purine nucleotides from the nucleotide pool, thus preventing their incorporation into DNA/RNA and avoiding chromosomal lesions. The sequence is that of dITP/XTP pyrophosphatase from Corynebacterium urealyticum (strain ATCC 43042 / DSM 7109).